A 363-amino-acid polypeptide reads, in one-letter code: UDP-3-O-acylglucosamine N-acyltransferase (363 aa).

The active-site Proton acceptor is His237. The segment at Glu338 to Ser363 is disordered.

The protein belongs to the transferase hexapeptide repeat family. LpxD subfamily. As to quaternary structure, homotrimer.

It carries out the reaction a UDP-3-O-[(3R)-3-hydroxyacyl]-alpha-D-glucosamine + a (3R)-hydroxyacyl-[ACP] = a UDP-2-N,3-O-bis[(3R)-3-hydroxyacyl]-alpha-D-glucosamine + holo-[ACP] + H(+). The protein operates within bacterial outer membrane biogenesis; LPS lipid A biosynthesis. Catalyzes the N-acylation of UDP-3-O-acylglucosamine using 3-hydroxyacyl-ACP as the acyl donor. Is involved in the biosynthesis of lipid A, a phosphorylated glycolipid that anchors the lipopolysaccharide to the outer membrane of the cell. The chain is UDP-3-O-acylglucosamine N-acyltransferase from Synechococcus sp. (strain JA-2-3B'a(2-13)) (Cyanobacteria bacterium Yellowstone B-Prime).